Here is a 639-residue protein sequence, read N- to C-terminus: Bucky ball (639 aa).

Residues 178 to 187 (ATKECKEDPV) are compositionally biased toward basic and acidic residues. Disordered stretches follow at residues 178-205 (ATKE…SSQG), 218-242 (LDSS…EPQT), and 581-614 (RSWR…RSEY). A compositionally biased stretch (polar residues) spans 189–205 (RPTTYSDSAYDAESSQG). Positions 225-240 (EEEEEEEKDVNEEDEP) are enriched in acidic residues. Polar residues predominate over residues 584–593 (RQVTGPQDQG). Over residues 596–609 (PLRRSTCKSIHQQR) the composition is skewed to basic residues. Symmetric dimethylarginine is present on residues Arg-627 and Arg-629. 3 consecutive short sequence motifs (RG Motif) follow at residues 627 to 628 (RG), 629 to 630 (RG), and 635 to 636 (RG).

As to quaternary structure, specifically interacts (when methylated) with tdrd6 (via Tudor domain); interaction is responsible for recruitment of different protein complexes to germ plasm. Interacts with rbpms2 and dazl; interaction mediates Balbiani body formation. Interacts with kif5ba; interaction leads to buc enrichment at the embryonic cleavage furrows and mediates dorsoventral patterning. Symmetric dimethylarginine modification promotes interaction with tdrd6.

The protein resides in the cytoplasm. It localises to the cleavage furrow. Its function is as follows. Prion-like protein required for the formation of Balbiani body (electron-dense aggregates in the oocyte) and germ plasm assembly, and for the establishment of oocyte polarity during early oogenesis. Mobility and aggregation properties are improved by tudor domain-containing protein tdrd6 through interaction with dimethylated arginines Tri-RG domains. Establishes oocyte polarity through interactions with RNA-binding proteins rbpms2 and dazl, initiating a positive feedback loop amplification mechanism in the Balbiani body. Interaction of BUC protein and mRNA with rbpms2 and dazl is required to mediate Balbiani body formation. Involved in recruitment of germ plasm to embryonic cleavage furrows and dorsoventral patterning through interaction with Kinesin-1/KIF5BA. The sequence is that of Bucky ball from Danio rerio (Zebrafish).